The primary structure comprises 173 residues: Phosphopantetheine adenylyltransferase (173 aa).

Serine 9 contributes to the substrate binding site. Residues 9–10 and histidine 17 contribute to the ATP site; that span reads SF. 3 residues coordinate substrate: lysine 41, threonine 73, and arginine 87. ATP-binding positions include 88-90, glutamate 98, and 123-129; these read GVR and YQYLSSS.

It belongs to the bacterial CoaD family. In terms of assembly, homohexamer. Mg(2+) serves as cofactor.

It is found in the cytoplasm. It carries out the reaction (R)-4'-phosphopantetheine + ATP + H(+) = 3'-dephospho-CoA + diphosphate. Its pathway is cofactor biosynthesis; coenzyme A biosynthesis; CoA from (R)-pantothenate: step 4/5. Reversibly transfers an adenylyl group from ATP to 4'-phosphopantetheine, yielding dephospho-CoA (dPCoA) and pyrophosphate. This is Phosphopantetheine adenylyltransferase from Limosilactobacillus fermentum (strain NBRC 3956 / LMG 18251) (Lactobacillus fermentum).